Consider the following 223-residue polypeptide: Protein-L-isoaspartate O-methyltransferase (223 aa).

Residue serine 70 is part of the active site.

This sequence belongs to the methyltransferase superfamily. L-isoaspartyl/D-aspartyl protein methyltransferase family.

It is found in the cytoplasm. The enzyme catalyses [protein]-L-isoaspartate + S-adenosyl-L-methionine = [protein]-L-isoaspartate alpha-methyl ester + S-adenosyl-L-homocysteine. Catalyzes the methyl esterification of L-isoaspartyl residues in peptides and proteins that result from spontaneous decomposition of normal L-aspartyl and L-asparaginyl residues. It plays a role in the repair and/or degradation of damaged proteins. This Saccharophagus degradans (strain 2-40 / ATCC 43961 / DSM 17024) protein is Protein-L-isoaspartate O-methyltransferase.